The chain runs to 540 residues: Terminase large subunit (540 aa).

Mn(2+) contacts are provided by Asp352, Asp424, and Asp523.

The protein belongs to the skunavirus terminase large subunit family. In terms of assembly, interacts with the terminase small subunit; the active complex is probably heterooligomeric. Requires Mn(2+) as cofactor. The cofactor is Mg(2+).

Its function is as follows. The terminase large subunit acts as an ATP driven molecular motor necessary for viral DNA translocation into empty capsids and as an endonuclease that cuts the viral genome to initiate and to end a packaging reaction. The terminase lies at a unique vertex of the procapsid and is composed of two subunits, a small terminase subunit involved in viral DNA recognition (packaging sequence), and a large terminase subunit possessing endonucleolytic and ATPase activities. Both terminase subunits heterooligomerize and are docked on the portal protein to form the packaging machine. The terminase large subunit exhibits endonuclease activity and cleaves the viral genome concatemer. This Lactococcus lactis (Lactococcus lactis bacteriophage SK1) protein is Terminase large subunit.